A 397-amino-acid chain; its full sequence is Elongation factor Tu 1 (397 aa).

Positions 10-206 (KPHVNIGTIG…AVDENIPQPE (197 aa)) constitute a tr-type G domain. The tract at residues 19-26 (GHIDHGKT) is G1. 19-26 (GHIDHGKT) provides a ligand contact to GTP. Threonine 26 contributes to the Mg(2+) binding site. The tract at residues 62-66 (GITIS) is G2. Residues 83–86 (DCPG) form a G3 region. Residues 83-87 (DCPGH) and 138-141 (NKAD) each bind GTP. A G4 region spans residues 138 to 141 (NKAD). Positions 176–178 (SAL) are G5.

It belongs to the TRAFAC class translation factor GTPase superfamily. Classic translation factor GTPase family. EF-Tu/EF-1A subfamily. In terms of assembly, monomer.

It is found in the cytoplasm. The enzyme catalyses GTP + H2O = GDP + phosphate + H(+). Its function is as follows. GTP hydrolase that promotes the GTP-dependent binding of aminoacyl-tRNA to the A-site of ribosomes during protein biosynthesis. This is Elongation factor Tu 1 from Streptomyces avermitilis (strain ATCC 31267 / DSM 46492 / JCM 5070 / NBRC 14893 / NCIMB 12804 / NRRL 8165 / MA-4680).